The primary structure comprises 141 residues: Large ribosomal subunit protein uL11 (141 aa).

The protein belongs to the universal ribosomal protein uL11 family. As to quaternary structure, part of the ribosomal stalk of the 50S ribosomal subunit. Interacts with L10 and the large rRNA to form the base of the stalk. L10 forms an elongated spine to which L12 dimers bind in a sequential fashion forming a multimeric L10(L12)X complex. Post-translationally, one or more lysine residues are methylated.

Forms part of the ribosomal stalk which helps the ribosome interact with GTP-bound translation factors. In Campylobacter concisus (strain 13826), this protein is Large ribosomal subunit protein uL11.